We begin with the raw amino-acid sequence, 352 residues long: Quinolinate synthase (352 aa).

Residues histidine 48 and serine 69 each coordinate iminosuccinate. [4Fe-4S] cluster is bound at residue cysteine 114. Residues 140–142 and serine 157 each bind iminosuccinate; that span reads YAN. Residue cysteine 201 participates in [4Fe-4S] cluster binding. Residues 227–229 and threonine 244 each bind iminosuccinate; that span reads HPE. Residue cysteine 298 participates in [4Fe-4S] cluster binding.

This sequence belongs to the quinolinate synthase family. Type 1 subfamily. [4Fe-4S] cluster is required as a cofactor.

The protein resides in the cytoplasm. It carries out the reaction iminosuccinate + dihydroxyacetone phosphate = quinolinate + phosphate + 2 H2O + H(+). It functions in the pathway cofactor biosynthesis; NAD(+) biosynthesis; quinolinate from iminoaspartate: step 1/1. Catalyzes the condensation of iminoaspartate with dihydroxyacetone phosphate to form quinolinate. The protein is Quinolinate synthase of Pseudomonas entomophila (strain L48).